The sequence spans 1058 residues: Carbamoyl phosphate synthase large chain (1058 aa).

The carboxyphosphate synthetic domain stretch occupies residues 1–401; the sequence is MPKRKDIQKI…SLLKACRSLE (401 aa). Positions 129, 169, 175, 176, 208, 210, 215, 241, 242, 243, 284, and 298 each coordinate ATP. An ATP-grasp 1 domain is found at 133 to 327; that stretch reads KQLMQELDQP…IAKLAAKIAV (195 aa). Mg(2+) is bound by residues Gln284, Glu298, and Asn300. Mn(2+)-binding residues include Gln284, Glu298, and Asn300. Residues 402 to 546 are oligomerization domain; sequence IGVCHNEMTS…YSTYELENES (145 aa). The tract at residues 547–929 is carbamoyl phosphate synthetic domain; that stretch reads VQSNKESILV…ALYKAFEANN (383 aa). The 191-residue stretch at 671 to 861 folds into the ATP-grasp 2 domain; it reads EKALKELGIP…MAQIATKLIL (191 aa). 10 residues coordinate ATP: Arg707, Ser746, Ile748, Glu752, Gly777, Val778, His779, Ser780, Gln820, and Glu832. Residues Gln820, Glu832, and Asn834 each contribute to the Mg(2+) site. The Mn(2+) site is built by Gln820, Glu832, and Asn834. Residues 930–1058 enclose the MGS-like domain; sequence SHLSEFGQIV…ESRCFNIEAI (129 aa). Positions 930–1058 are allosteric domain; sequence SHLSEFGQIV…ESRCFNIEAI (129 aa).

This sequence belongs to the CarB family. Composed of two chains; the small (or glutamine) chain promotes the hydrolysis of glutamine to ammonia, which is used by the large (or ammonia) chain to synthesize carbamoyl phosphate. Tetramer of heterodimers (alpha,beta)4. The cofactor is Mg(2+). Mn(2+) is required as a cofactor.

The enzyme catalyses hydrogencarbonate + L-glutamine + 2 ATP + H2O = carbamoyl phosphate + L-glutamate + 2 ADP + phosphate + 2 H(+). It catalyses the reaction hydrogencarbonate + NH4(+) + 2 ATP = carbamoyl phosphate + 2 ADP + phosphate + 2 H(+). It participates in amino-acid biosynthesis; L-arginine biosynthesis; carbamoyl phosphate from bicarbonate: step 1/1. Its pathway is pyrimidine metabolism; UMP biosynthesis via de novo pathway; (S)-dihydroorotate from bicarbonate: step 1/3. Large subunit of the glutamine-dependent carbamoyl phosphate synthetase (CPSase). CPSase catalyzes the formation of carbamoyl phosphate from the ammonia moiety of glutamine, carbonate, and phosphate donated by ATP, constituting the first step of 2 biosynthetic pathways, one leading to arginine and/or urea and the other to pyrimidine nucleotides. The large subunit (synthetase) binds the substrates ammonia (free or transferred from glutamine from the small subunit), hydrogencarbonate and ATP and carries out an ATP-coupled ligase reaction, activating hydrogencarbonate by forming carboxy phosphate which reacts with ammonia to form carbamoyl phosphate. The polypeptide is Carbamoyl phosphate synthase large chain (Streptococcus pyogenes serotype M49 (strain NZ131)).